The sequence spans 326 residues: Putative GTPase CC_2483 (326 aa).

GTP is bound by residues 61–69 (GVPGAGKST), D203, and 238–240 (SGL).

It belongs to the SIMIBI class G3E GTPase family. ArgK/MeaB subfamily.

Functionally, may have GTPase activity. May also bind and hydrolyze ATP. May function as chaperone. The polypeptide is Putative GTPase CC_2483 (Caulobacter vibrioides (strain ATCC 19089 / CIP 103742 / CB 15) (Caulobacter crescentus)).